We begin with the raw amino-acid sequence, 1251 residues long: Phospholipid-transporting ATPase IC (1251 aa).

Residues 1 to 52 (MSTERDSETTFDEESQPNDEVVPYSDDETEDELEDQGSTVEPEQNRVNREAE) are disordered. Residues 1 to 121 (MSTERDSETT…LFEQFKRAAN (121 aa)) are Cytoplasmic-facing. Over residues 25–35 (SDDETEDELED) the composition is skewed to acidic residues. A compositionally biased stretch (basic and acidic residues) spans 43-52 (EQNRVNREAE). Residues 122-142 (FYFLILLILQAIPQISTLAWY) form a helical membrane-spanning segment. Topologically, residues 143-144 (TT) are exoplasmic loop. The chain crosses the membrane as a helical span at residues 145–165 (LVPLLLVLGITAIKDLVDDVA). The Cytoplasmic segment spans residues 166-339 (RHKMDKEINN…RTKIDYLMNY (174 aa)). A helical membrane pass occupies residues 340–360 (MVYTIFIVLILVSAGLAIGHA). The Exoplasmic loop portion of the chain corresponds to 361–385 (YWEAQVGNYSWYLYDGENATPSYRG). A helical transmembrane segment spans residues 386–406 (FLNFWGYIIVLNTMVPISLYV). Topologically, residues 407-952 (SVEVIRLGQS…SYIRMCKFLR (546 aa)) are cytoplasmic. The active-site 4-aspartylphosphate intermediate is the Asp454. Asp454, Lys455, Thr456, Glu555, Phe596, Lys619, Arg652, Thr732, Gly733, Asp734, Arg867, and Lys873 together coordinate ATP. Asp454 lines the Mg(2+) pocket. Mg(2+) is bound at residue Thr456. A Mg(2+)-binding site is contributed by Asp893. 2 residues coordinate ATP: Asn896 and Asp897. Asp897 is a binding site for Mg(2+). A helical transmembrane segment spans residues 953–973 (YFFYKNFAFTLVHFWYSFFNG). Residues 974-982 (YSAQTAYED) lie on the Exoplasmic loop side of the membrane. The helical transmembrane segment at 983 to 1003 (WFITLYNVLYSSLPVLLMGLL) threads the bilayer. The Cytoplasmic segment spans residues 1004-1032 (DQDVSDKLSLRFPGLYVVGQRDLLFNYKR). Residues 1033-1053 (FFVSLLHGVLTSMVLFFIPLG) form a helical membrane-spanning segment. Residues 1054 to 1071 (AYLQTVGQDGEAPSDYQS) lie on the Exoplasmic loop side of the membrane. Residues 1072 to 1092 (FAVTVASALVITVNFQIGLDT) traverse the membrane as a helical segment. The Cytoplasmic segment spans residues 1093 to 1094 (SY). The chain crosses the membrane as a helical span at residues 1095-1115 (WTFVNAFSIFGSIALYFGIMF). The Exoplasmic loop segment spans residues 1116–1142 (DFHSAGIHVLFPSAFQFTGTASNALRQ). A helical membrane pass occupies residues 1143–1163 (PYIWLTIILTVAVCLLPVVAI). The Cytoplasmic portion of the chain corresponds to 1164–1251 (RFLSMTIWPS…TAEYRRTVES (88 aa)). A Phosphoserine modification is found at Ser1223.

The protein belongs to the cation transport ATPase (P-type) (TC 3.A.3) family. Type IV subfamily. As to quaternary structure, component of a P4-ATPase flippase complex which consists of a catalytic alpha subunit ATP8B1 and an accessory beta subunit TMEM30A. The flippase ATP8B1:TMEM30A complex can form an intermediate phosphoenzyme in vitro. Also interacts with beta subunit TMEM30B. Mg(2+) serves as cofactor. Hepatocytes, bile duct, intestinal epithelial cells (cholangiocytes and ileocytes), and pancreatic acinar cells.

The protein localises to the cell membrane. The protein resides in the apical cell membrane. Its subcellular location is the cell projection. It is found in the stereocilium. It localises to the endoplasmic reticulum. The protein localises to the golgi apparatus. The enzyme catalyses ATP + H2O + phospholipidSide 1 = ADP + phosphate + phospholipidSide 2.. The catalysed reaction is a 1,2-diacyl-sn-glycero-3-phosphocholine(out) + ATP + H2O = a 1,2-diacyl-sn-glycero-3-phosphocholine(in) + ADP + phosphate + H(+). It carries out the reaction a 1,2-diacyl-sn-glycero-3-phospho-L-serine(out) + ATP + H2O = a 1,2-diacyl-sn-glycero-3-phospho-L-serine(in) + ADP + phosphate + H(+). Its function is as follows. Catalytic component of a P4-ATPase flippase complex which catalyzes the hydrolysis of ATP coupled to the transport of phospholipids, in particular phosphatidylcholines (PC), from the outer to the inner leaflet of the plasma membrane. May participate in the establishment of the canalicular membrane integrity by ensuring asymmetric distribution of phospholipids in the canicular membrane. Thus may have a role in the regulation of bile acids transport into the canaliculus, uptake of bile acids from intestinal contents into intestinal mucosa or both and protect hepatocytes from bile salts. Involved in the microvillus formation in polarized epithelial cells; the function seems to be independent from its flippase activity. Participates in correct apical membrane localization of CDC42, CFTR and SLC10A2. Enables CDC42 clustering at the apical membrane during enterocyte polarization through the interaction between CDC42 polybasic region and negatively charged membrane lipids provided by ATP8B1. Together with TMEM30A is involved in uptake of the synthetic drug alkylphospholipid perifosine. Required for the preservation of cochlear hair cells in the inner ear. According PubMed:20852622 is proposed to act as cardiolipin transporter during inflammatory injury; the function is questioned by PubMed:21475228. This Mus musculus (Mouse) protein is Phospholipid-transporting ATPase IC.